We begin with the raw amino-acid sequence, 240 residues long: Ribonuclease P protein component (240 aa).

The tract at residues 1–140 (MDEKDLATQQ…KKAGGKGLVS (140 aa)) is disordered. Pro residues predominate over residues 40-51 (APPPHRVIPPHP). The interval 47–123 (IPPHPGLRQD…PGPDRDGGSK (77 aa)) is insert. The span at 122 to 132 (SKASRASSPKK) shows a compositional bias: low complexity.

This sequence belongs to the RnpA family. In terms of assembly, consists of a catalytic RNA component (M1 or rnpB) and a protein subunit.

The enzyme catalyses Endonucleolytic cleavage of RNA, removing 5'-extranucleotides from tRNA precursor.. RNaseP catalyzes the removal of the 5'-leader sequence from pre-tRNA to produce the mature 5'-terminus. It can also cleave other RNA substrates such as 4.5S RNA. The protein component plays an auxiliary but essential role in vivo by binding to the 5'-leader sequence and broadening the substrate specificity of the ribozyme. This is Ribonuclease P protein component from Thermus filiformis.